We begin with the raw amino-acid sequence, 190 residues long: 7-methyl-GTP pyrophosphatase (190 aa).

Asp69 serves as the catalytic Proton acceptor.

The protein belongs to the Maf family. YceF subfamily. It depends on a divalent metal cation as a cofactor.

The protein localises to the cytoplasm. The catalysed reaction is N(7)-methyl-GTP + H2O = N(7)-methyl-GMP + diphosphate + H(+). Its function is as follows. Nucleoside triphosphate pyrophosphatase that hydrolyzes 7-methyl-GTP (m(7)GTP). May have a dual role in cell division arrest and in preventing the incorporation of modified nucleotides into cellular nucleic acids. The protein is 7-methyl-GTP pyrophosphatase of Xanthomonas axonopodis pv. citri (strain 306).